Reading from the N-terminus, the 99-residue chain is DNA-directed RNA polymerase subunit omega (99 aa).

This sequence belongs to the RNA polymerase subunit omega family. As to quaternary structure, the RNAP catalytic core consists of 2 alpha, 1 beta, 1 beta' and 1 omega subunit. When a sigma factor is associated with the core the holoenzyme is formed, which can initiate transcription.

The catalysed reaction is RNA(n) + a ribonucleoside 5'-triphosphate = RNA(n+1) + diphosphate. Functionally, promotes RNA polymerase assembly. Latches the N- and C-terminal regions of the beta' subunit thereby facilitating its interaction with the beta and alpha subunits. The chain is DNA-directed RNA polymerase subunit omega from Thermus thermophilus (strain ATCC BAA-163 / DSM 7039 / HB27).